A 310-amino-acid polypeptide reads, in one-letter code: Porphobilinogen deaminase (310 aa).

Cys242 carries the post-translational modification S-(dipyrrolylmethanemethyl)cysteine.

Belongs to the HMBS family. In terms of assembly, monomer. Dipyrromethane is required as a cofactor.

It carries out the reaction 4 porphobilinogen + H2O = hydroxymethylbilane + 4 NH4(+). Its pathway is porphyrin-containing compound metabolism; protoporphyrin-IX biosynthesis; coproporphyrinogen-III from 5-aminolevulinate: step 2/4. In terms of biological role, tetrapolymerization of the monopyrrole PBG into the hydroxymethylbilane pre-uroporphyrinogen in several discrete steps. The sequence is that of Porphobilinogen deaminase from Psychromonas ingrahamii (strain DSM 17664 / CCUG 51855 / 37).